Here is a 1161-residue protein sequence, read N- to C-terminus: MEADWDELSRIPVPPPSPHGLPTAATTIAFDDVSELLWAGNEFGRITSFYGPELQRYTSVRAHPVSDGPVRQILFHERGVISLSPKSVHMITRRGLTQWHISHEEMTDLYCMSLTAQLNKIIVAGCQRAMFTIDIDKGIIVDKLHTDHNYTLMKKSRYLCAATDTGSVNALSLTDFRVVKSWKSHGTAINDMDARNDLLVTCGFSVRHLGSPIVDPLANVYDLKTLSPLPPIPFHAGAAYVRMHPKLSTTSFVASQTGQLQVVDLMNPNAINLRQANVSFMLGIDISPSGEALAINDAECSIHLWGSPSKIHFNEMSKEVEFADVVPRPPPLDWSPDTPLNMIGMPYYRERLLSAWPSHLVFEVGSPPAPIDQSLIPYLRPAEMGHYAPNPKKTRRYQVENTRALTTAEPALIAPKFLSEKAREQNKFKSEASVSDTAEALAGAKLNGEAEDDPLLKYSNVEIKYSRFGVDDFDFRFYNQTTFSGLETHIANSFTNALLQLLKFIPLVRNLALHHAASTCIYETCLLCEMGYLFDMLEKANGQNCQATNLLRTFSSYREASNLGLFEENLTTKSLSSAIQSVNRFFLNQIAHDFRMIVPSSDDLDQRLSTIASESIRCMFCQNEIVRPGNSLANELIYPAIDIKQARRNPAFRFSNILRASIERETQNRGWCNYCRRYQQVTIRKSIHRMPLVLILNAALSNPICRRLWSIPGWLPEEVGIAVDNGQVMCFEGDELKTQLQNKLPNLVVYELVGLVSEIDIPEHQKPHLVSFINVSISSRELEAKNRWHLFNDFLVTEVDKDEALRFNQPWKSPCILAYQAKDARHAVDDSWKNVLDITLLFRDWSLNGGRAVETRQTLTEEEKPTPGTPVALDTEFVDLEKAEIDVKADGSQEIVRPSKSGLARVSVLRGSGVHEGVPFIDDYITIKEPIVDYVTQYSGIKPGDLDPRTSQHNLVPLKVAYKKLWLLLNLGCVFVGHGLASDFRKINIQVPKSQTVDTQYLYFHPGKNRRLSLRYLAWAVFKEYIQEEPADNNQGHDSIEDARMALRLWKKFQEYEDAGIVNQILEEIFREGSKLGFRPPPRNGVATVLSRPGTAVTMQNSSGRNTPSTPDVGGAATATATTSAPATPRQAFRRSIALTPSNGTFGGPGAGDFFGGSPLK.

2 WD repeats span residues 20–59 and 276–315; these read GLPT…RYTS and ANVS…HFNE. The linker stretch occupies residues 316–452; sequence MSKEVEFADV…GAKLNGEAED (137 aa). The USP domain maps to 453-822; the sequence is DPLLKYSNVE…SPCILAYQAK (370 aa). The Exonuclease domain occupies 871-1049; it reads VALDTEFVDL…IEDARMALRL (179 aa). A divalent metal cation is bound by residues aspartate 874, glutamate 876, aspartate 983, and aspartate 1042. Residues 1009–1060 form a WD 4 repeat; the sequence is NRRLSLRYLAWAVFKEYIQEEPADNNQGHDSIEDARMALRLWKKFQEYEDAG. The disordered stretch occupies residues 1092–1161; the sequence is RPGTAVTMQN…GDFFGGSPLK (70 aa). Polar residues predominate over residues 1097 to 1110; the sequence is VTMQNSSGRNTPST. Low complexity predominate over residues 1116-1129; sequence AATATATTSAPATP. The segment covering 1145 to 1155 has biased composition (gly residues); it reads TFGGPGAGDFF.

The protein belongs to the peptidase C19 family. PAN2 subfamily. As to quaternary structure, forms a heterotrimer with an asymmetric homodimer of the regulatory subunit pan3 to form the poly(A)-nuclease (PAN) deadenylation complex. The cofactor is a divalent metal cation.

It localises to the cytoplasm. The catalysed reaction is Exonucleolytic cleavage of poly(A) to 5'-AMP.. Positively regulated by the regulatory subunit pan3. Catalytic subunit of the poly(A)-nuclease (PAN) deadenylation complex, one of two cytoplasmic mRNA deadenylases involved in mRNA turnover. PAN specifically shortens poly(A) tails of RNA and the activity is stimulated by poly(A)-binding protein pab1. PAN deadenylation is followed by rapid degradation of the shortened mRNA tails by the CCR4-NOT complex. Deadenylated mRNAs are then degraded by two alternative mechanisms, namely exosome-mediated 3'-5' exonucleolytic degradation, or deadenylation-dependent mRNA decaping and subsequent 5'-3' exonucleolytic degradation by xrn1. May also be involved in post-transcriptional maturation of mRNA poly(A) tails. This is PAN2-PAN3 deadenylation complex catalytic subunit pan2 from Neosartorya fischeri (strain ATCC 1020 / DSM 3700 / CBS 544.65 / FGSC A1164 / JCM 1740 / NRRL 181 / WB 181) (Aspergillus fischerianus).